Consider the following 360-residue polypeptide: Phenylalanine--tRNA ligase alpha subunit (360 aa).

Glu-260 contributes to the Mg(2+) binding site.

It belongs to the class-II aminoacyl-tRNA synthetase family. Phe-tRNA synthetase alpha subunit type 1 subfamily. As to quaternary structure, tetramer of two alpha and two beta subunits. Requires Mg(2+) as cofactor.

The protein localises to the cytoplasm. It carries out the reaction tRNA(Phe) + L-phenylalanine + ATP = L-phenylalanyl-tRNA(Phe) + AMP + diphosphate + H(+). In Rhizobium etli (strain CIAT 652), this protein is Phenylalanine--tRNA ligase alpha subunit.